The sequence spans 565 residues: Deformed epidermal autoregulatory factor 1 homolog (565 aa).

2 disordered regions span residues 34-62 (GGEA…ETPR) and 162-190 (GLKG…KGGT). The span at 169–181 (PLTPGPQSPPTPL) shows a compositional bias: pro residues. Thr171 is subject to Phosphothreonine. Ser176 bears the Phosphoserine mark. A Phosphothreonine modification is found at Thr179. Residues 193–273 (NWDPSVYDSE…QCLIQDGILN (81 aa)) enclose the SAND domain. Positions 301–316 (KRRKKENELPTTPVKK) match the Nuclear localization signal motif. The interaction with LMO4 stretch occupies residues 403-478 (IAPFPEAALP…QLKTLFEQAK (76 aa)). Phosphothreonine is present on Thr432. Residue Ser448 is modified to Phosphoserine. 8 residues coordinate Zn(2+): Cys504, Cys507, Cys515, Cys518, Cys524, Cys528, His536, and Cys540. The MYND-type zinc finger occupies 504–540 (CVNCGREAMSECTGCHKVNYCSTFCQRKDWKDHQHIC).

As to quaternary structure, homodimer. Isoform 1 and isoform 4 may form a heterodimer. Interacts with LMO2 and CLIM2. Interacts with LMO4; LMO4 blocks export from nucleus. May interact with the corepressors NCOR1 and NCRO2. Identified in a complex with the XRCC5 and XRCC6 heterodimer. Interacts (via the SAND domain) with the DNA-PK complex subunit XRCC6; the interaction is direct and may be inhibited by DNA-binding. May be phosphorylated by DNA-PK complex in a DNA independent manner (in vitro). In terms of tissue distribution, expressed in various tissues and cells such as in peripheral mononuclear cells and hormone-secreting pituitary cells. Expression in pancreatic lymph nodes of patients with type 1 diabetes is 20 times higher than in healthy controls. Highly expressed in fetal and adult brain.

Its subcellular location is the nucleus. The protein resides in the cytoplasm. It is found in the secreted. Transcription factor that binds to sequence with multiple copies of 5'-TTC[CG]G-3' present in its own promoter and that of the HNRPA2B1 gene. Down-regulates transcription of these genes. Binds to the retinoic acid response element (RARE) 5'-AGGGTTCACCGAAAGTTCA-3'. Activates the proenkephalin gene independently of promoter binding, probably through protein-protein interaction. When secreted, behaves as an inhibitor of cell proliferation, by arresting cells in the G0 or G1 phase. Required for neural tube closure and skeletal patterning. Regulates epithelial cell proliferation and side-branching in the mammary gland. Controls the expression of peripheral tissue antigens in pancreatic lymph nodes. Isoform 1 displays greater transcriptional activity than isoform 4. Isoform 4 may inhibit transcriptional activity of isoform 1 by interacting with isoform 1 and retaining it in the cytoplasm. Transcriptional activator of EIF4G3. This is Deformed epidermal autoregulatory factor 1 homolog (DEAF1) from Homo sapiens (Human).